The chain runs to 281 residues: Light-independent protochlorophyllide reductase iron-sulfur ATP-binding protein (281 aa).

Residues 10 to 15 (GIGKST) and K39 each bind ATP. Mg(2+) is bound at residue S14. The [4Fe-4S] cluster site is built by C95 and C129. 180–181 (NR) is a binding site for ATP.

It belongs to the NifH/BchL/ChlL family. As to quaternary structure, homodimer. Protochlorophyllide reductase is composed of three subunits; ChlL, ChlN and ChlB. The cofactor is [4Fe-4S] cluster.

It catalyses the reaction chlorophyllide a + oxidized 2[4Fe-4S]-[ferredoxin] + 2 ADP + 2 phosphate = protochlorophyllide a + reduced 2[4Fe-4S]-[ferredoxin] + 2 ATP + 2 H2O. It participates in porphyrin-containing compound metabolism; chlorophyll biosynthesis (light-independent). In terms of biological role, component of the dark-operative protochlorophyllide reductase (DPOR) that uses Mg-ATP and reduced ferredoxin to reduce ring D of protochlorophyllide (Pchlide) to form chlorophyllide a (Chlide). This reaction is light-independent. The L component serves as a unique electron donor to the NB-component of the complex, and binds Mg-ATP. In Thermosynechococcus vestitus (strain NIES-2133 / IAM M-273 / BP-1), this protein is Light-independent protochlorophyllide reductase iron-sulfur ATP-binding protein.